Consider the following 484-residue polypeptide: Ribosomal protein uS12 methylthiotransferase RimO (484 aa).

An MTTase N-terminal domain is found at 8-119 (RRVAMVTLGC…LAERLDDVLA (112 aa)). 6 residues coordinate [4Fe-4S] cluster: C17, C53, C82, C184, C188, and C191. Residues 170–401 (LDDSPLAALK…ALADELVAQR (232 aa)) enclose the Radical SAM core domain. Residues 403–469 (EDRVGTEVRV…GVDLVVRPVG (67 aa)) form the TRAM domain.

This sequence belongs to the methylthiotransferase family. RimO subfamily. The cofactor is [4Fe-4S] cluster.

The protein resides in the cytoplasm. The enzyme catalyses L-aspartate(89)-[ribosomal protein uS12]-hydrogen + (sulfur carrier)-SH + AH2 + 2 S-adenosyl-L-methionine = 3-methylsulfanyl-L-aspartate(89)-[ribosomal protein uS12]-hydrogen + (sulfur carrier)-H + 5'-deoxyadenosine + L-methionine + A + S-adenosyl-L-homocysteine + 2 H(+). Functionally, catalyzes the methylthiolation of an aspartic acid residue of ribosomal protein uS12. This is Ribosomal protein uS12 methylthiotransferase RimO from Saccharopolyspora erythraea (strain ATCC 11635 / DSM 40517 / JCM 4748 / NBRC 13426 / NCIMB 8594 / NRRL 2338).